A 463-amino-acid polypeptide reads, in one-letter code: 4-hydroxybenzoate polyprenyltransferase, mitochondrial (463 aa).

Disordered regions lie at residues 28–48 (NNNT…STFN) and 133–152 (LLDD…NNKP). Residues 137 to 150 (NNSNSNNNNNSNNN) show a composition bias toward low complexity. A run of 7 helical transmembrane segments spans residues 181–201 (IGVW…APAG), 206–226 (LKTM…GCVI), 257–277 (LIFL…SLNY), 305–325 (FVLG…IAGS), 330–350 (IVAP…TIYA), 375–395 (IILS…GIAA), and 431–451 (FISN…SKLL).

This sequence belongs to the UbiA prenyltransferase family. It depends on Mg(2+) as a cofactor.

It is found in the mitochondrion inner membrane. The enzyme catalyses an all-trans-polyprenyl diphosphate + 4-hydroxybenzoate = a 4-hydroxy-3-(all-trans-polyprenyl)benzoate + diphosphate. Its pathway is cofactor biosynthesis; ubiquinone biosynthesis. Functionally, catalyzes the prenylation of para-hydroxybenzoate (PHB) with an all-trans polyprenyl group. Mediates the second step in the final reaction sequence of coenzyme Q (CoQ) biosynthesis, which is the condensation of the polyisoprenoid side chain with PHB. In terms of biological role, catalyzes the prenylation of para-hydroxybenzoate (PHB) with an all-trans polyprenyl group. Mediates the second step in the final reaction sequence of coenzyme Q (CoQ) biosynthesis, which is the condensation of the polyisoprenoid side chain with PHB, generating the first membrane-bound Q intermediate. The protein is 4-hydroxybenzoate polyprenyltransferase, mitochondrial of Dictyostelium discoideum (Social amoeba).